A 100-amino-acid chain; its full sequence is Defensin-6 (100 aa).

The signal sequence occupies residues Met1–Ala19. Residues Glu20–Arg68 constitute a propeptide that is removed on maturation. 3 disulfides stabilise this stretch: Cys72–Cys99, Cys74–Cys88, and Cys78–Cys98.

It belongs to the alpha-defensin family. Homodimer. Self-assembles into higher-order oligomers termed nanonets, fibril-like structures that entrap microbes. Self-assembly into nanonets seems to protect against proteolytic digestion in duodenal fluid. Interacts with Y.enterocolitica invasin and S.typhimurium fliC/flagellim; the interaction creates an anchoring site for progressive DEFA6 self-assembly into nanonets. Proteolytically cleaved by trypsin at Arg-68; the propeptide is stored in the tissue of the small intestine and the mature peptide is found in the luminal fluid; cleavage may occur during or after release into the lumen. The N-terminal propeptide region suppresses self-assembly and renders DEFA6 propeptide unable to agglutinate bacteria and protect human epithelial cells from bacterial invasion. In terms of processing, under reducing conditions, naturally present in the gut owing to the low redox potential or enzymatically generated by the thioredoxin system, the disulfide bridges are opened leading to a conformational change of DEF6, thereby changing its antimicrobial spectrum. The reduced form exhibits inhibitory activity against anaerobic bacteria, in contrast to the minimal antimicrobial activity of the disulfide-linked oxidized form. The formation of higher-order nanonets and bacterial entrapment is independent of the redox state.

The protein localises to the secreted. It is found in the cytoplasmic vesicle. The protein resides in the secretory vesicle. In terms of biological role, host-defense peptide that contributes to intestinal innate immunity and mediates homeostasis at mucosal surfaces by forming higher-order oligomers that capture bacteria and prevent microbial invasion of the epithelium. After binding to bacterial surface proteins, undergoes ordered self-assembly to form fibril-like nanonets that surround and entangle bacteria and thereby prevent bacterial invasion across the epithelial barrier. Entangles and agglutinates Gram-negative bacteria, such as E.coli, S.typhimurium and Y.enterocolitica, and Gram-positive bacteria such as L.monocytogenes, thereby protecting the intestine against invasion by enteric bacterial pathogens. Blocks adhesion of C.albicans to intestinal epithelial cells and thereby suppresses fungal invasion of epithelial cells and biofilm formation. Under reducing conditions and in an acidic environment similar to the intestinal milieu, exhibits inhibitory activity against anaerobic bacteria such as B.adolescentis, L.acidophilus, and B.breve, as well as B.longum and S.thermophilus, possibly by leading to alterations in bacterial cell envelope structures. The disulfide-linked oxidized form exhibits negligible antimicrobial activity against Gram-negative and Gram-positive bacteria, as compared to the enteric defensin DEFA5. The protein is Defensin-6 (DEFA6) of Pan troglodytes (Chimpanzee).